We begin with the raw amino-acid sequence, 155 residues long: Transcription antitermination protein NusB (155 aa).

It belongs to the NusB family.

In terms of biological role, involved in transcription antitermination. Required for transcription of ribosomal RNA (rRNA) genes. Binds specifically to the boxA antiterminator sequence of the ribosomal RNA (rrn) operons. This Vibrio vulnificus (strain CMCP6) protein is Transcription antitermination protein NusB.